The following is a 389-amino-acid chain: Methionyl-tRNA formyltransferase, mitochondrial (389 aa).

It belongs to the Fmt family.

The protein localises to the mitochondrion. It carries out the reaction L-methionyl-tRNA(fMet) + (6R)-10-formyltetrahydrofolate = N-formyl-L-methionyl-tRNA(fMet) + (6S)-5,6,7,8-tetrahydrofolate + H(+). Its function is as follows. Methionyl-tRNA formyltransferase that formylates methionyl-tRNA in mitochondria and is crucial for translation initiation. This is Methionyl-tRNA formyltransferase, mitochondrial (MTFMT) from Homo sapiens (Human).